A 553-amino-acid chain; its full sequence is Dihydroxy-acid dehydratase (553 aa).

Position 49 (C49) interacts with [2Fe-2S] cluster. D81 is a Mg(2+) binding site. A [2Fe-2S] cluster-binding site is contributed by C122. Positions 123 and 124 each coordinate Mg(2+). Residue K124 is modified to N6-carboxylysine. C194 lines the [2Fe-2S] cluster pocket. E444 contributes to the Mg(2+) binding site. S470 acts as the Proton acceptor in catalysis.

The protein belongs to the IlvD/Edd family. In terms of assembly, homodimer. [2Fe-2S] cluster is required as a cofactor. Mg(2+) serves as cofactor.

It catalyses the reaction (2R)-2,3-dihydroxy-3-methylbutanoate = 3-methyl-2-oxobutanoate + H2O. The catalysed reaction is (2R,3R)-2,3-dihydroxy-3-methylpentanoate = (S)-3-methyl-2-oxopentanoate + H2O. The protein operates within amino-acid biosynthesis; L-isoleucine biosynthesis; L-isoleucine from 2-oxobutanoate: step 3/4. Its pathway is amino-acid biosynthesis; L-valine biosynthesis; L-valine from pyruvate: step 3/4. Functions in the biosynthesis of branched-chain amino acids. Catalyzes the dehydration of (2R,3R)-2,3-dihydroxy-3-methylpentanoate (2,3-dihydroxy-3-methylvalerate) into 2-oxo-3-methylpentanoate (2-oxo-3-methylvalerate) and of (2R)-2,3-dihydroxy-3-methylbutanoate (2,3-dihydroxyisovalerate) into 2-oxo-3-methylbutanoate (2-oxoisovalerate), the penultimate precursor to L-isoleucine and L-valine, respectively. This chain is Dihydroxy-acid dehydratase, found in Aeropyrum pernix (strain ATCC 700893 / DSM 11879 / JCM 9820 / NBRC 100138 / K1).